An 85-amino-acid chain; its full sequence is U4-theraphotoxin-Hhn1a (85 aa).

Positions 1–22 are cleaved as a signal peptide; that stretch reads MKVTLIAILTCAAALVLHTTAA. A propeptide spanning residues 23–48 is cleaved from the precursor; that stretch reads EELEAESQLMEVGMPDTELAAVDEER. 3 disulfide bridges follow: Cys52-Cys66, Cys56-Cys77, and Cys71-Cys82.

Belongs to the neurotoxin 12 (Hwtx-2) family. 02 (Hwtx-2) subfamily. In terms of assembly, monomer. In terms of tissue distribution, expressed by the venom gland.

The protein resides in the secreted. Its function is as follows. Neurotoxin active on both insects and mammals. In Cyriopagopus hainanus (Chinese bird spider), this protein is U4-theraphotoxin-Hhn1a.